Consider the following 214-residue polypeptide: Uridine kinase (214 aa).

11 to 18 (GGSGSGKT) contacts ATP.

This sequence belongs to the uridine kinase family.

The protein resides in the cytoplasm. The enzyme catalyses uridine + ATP = UMP + ADP + H(+). It carries out the reaction cytidine + ATP = CMP + ADP + H(+). Its pathway is pyrimidine metabolism; CTP biosynthesis via salvage pathway; CTP from cytidine: step 1/3. It participates in pyrimidine metabolism; UMP biosynthesis via salvage pathway; UMP from uridine: step 1/1. The protein is Uridine kinase of Brevibacillus brevis (strain 47 / JCM 6285 / NBRC 100599).